The chain runs to 247 residues: Probable transcriptional regulatory protein Glov_1245 (247 aa).

The protein belongs to the TACO1 family.

The protein resides in the cytoplasm. This chain is Probable transcriptional regulatory protein Glov_1245, found in Trichlorobacter lovleyi (strain ATCC BAA-1151 / DSM 17278 / SZ) (Geobacter lovleyi).